The sequence spans 570 residues: Phosphocholine hydrolase Lem3 (570 aa).

Its subcellular location is the secreted. The protein resides in the host cytoplasm. The enzyme catalyses [Rab1 protein]-O-phosphocholine-L-serine + H2O = [Rab1 protein]-L-serine + phosphocholine + H(+). Virulence effector that plays a role in hijacking the host vesicular trafficking by recruiting the small guanosine triphosphatase (GTPase) Rab1 to the cytosolic face of the Legionella-containing vacuole (LCVs). Acts as a phosphocholine hydrolase by mediating the hydrolysis of phosphocholine to Ser residues of host RAB1 (RAB1A, RAB1B or RAB1C). Dephosphocholination of target proteins restores accessibility to GTPase effector LepB. Can act on both GDP-bound and GTP-bound Rab proteins. This is Phosphocholine hydrolase Lem3 (lem3) from Legionella pneumophila subsp. pneumophila (strain Philadelphia 1 / ATCC 33152 / DSM 7513).